Reading from the N-terminus, the 712-residue chain is Polyphosphate kinase (712 aa).

An ATP-binding site is contributed by asparagine 49. Mg(2+) contacts are provided by arginine 398 and arginine 428. Histidine 458 functions as the Phosphohistidine intermediate in the catalytic mechanism. Tyrosine 491, arginine 587, and histidine 615 together coordinate ATP.

The protein belongs to the polyphosphate kinase 1 (PPK1) family. Mg(2+) is required as a cofactor. Post-translationally, an intermediate of this reaction is the autophosphorylated ppk in which a phosphate is covalently linked to a histidine residue through a N-P bond.

It catalyses the reaction [phosphate](n) + ATP = [phosphate](n+1) + ADP. Functionally, catalyzes the reversible transfer of the terminal phosphate of ATP to form a long-chain polyphosphate (polyP). The sequence is that of Polyphosphate kinase from Prochlorococcus marinus (strain MIT 9313).